A 118-amino-acid polypeptide reads, in one-letter code: Holin-like protein CidA 2 (118 aa).

The next 4 membrane-spanning stretches (helical) occupy residues 5–27 (MLLL…QGVF), 31–50 (MPGS…TRIL), 62–84 (LLVF…ESFL), and 88–110 (GSII…GYIS).

The protein belongs to the CidA/LrgA family. CidA subfamily.

The protein resides in the cell membrane. Functionally, increases the activity of extracellular murein hydrolases possibly by mediating their export via hole formation. Inhibited by the antiholin-like proteins LrgAB. In an unstressed cell, the LrgAB products probably inhibit the function of the CidA protein. When a cell is stressed by the addition of antibiotics or by other factors in the environment, CidA possibly oligomerizes within the bacterial cell membrane, creating lesions that disrupt the proton motive force, which in turn results in loss of cell viability. These lesions are also hypothesized to regulate the subsequent cell lysis by either allowing the murein hydrolases access to the cell wall substrate and/or regulating their activity by a possible change in the cell wall pH that results from loss of membrane potential. The polypeptide is Holin-like protein CidA 2 (cidA2) (Bacillus anthracis).